The sequence spans 1184 residues: DNA-directed RNA polymerase subunit beta' (1184 aa).

Residues cysteine 60, cysteine 62, cysteine 75, and cysteine 78 each coordinate Zn(2+). Residues aspartate 449, aspartate 451, and aspartate 453 each coordinate Mg(2+). Positions 794, 867, 874, and 877 each coordinate Zn(2+). Residues 1165–1184 (NDQQERQDKEKEETEVKASN) are disordered.

Belongs to the RNA polymerase beta' chain family. In terms of assembly, the RNAP catalytic core consists of 2 alpha, 1 beta, 1 beta' and 1 omega subunit. When a sigma factor is associated with the core the holoenzyme is formed, which can initiate transcription. The cofactor is Mg(2+). It depends on Zn(2+) as a cofactor.

The catalysed reaction is RNA(n) + a ribonucleoside 5'-triphosphate = RNA(n+1) + diphosphate. Its function is as follows. DNA-dependent RNA polymerase catalyzes the transcription of DNA into RNA using the four ribonucleoside triphosphates as substrates. The protein is DNA-directed RNA polymerase subunit beta' of Thermoanaerobacter pseudethanolicus (strain ATCC 33223 / 39E) (Clostridium thermohydrosulfuricum).